Consider the following 58-residue polypeptide: uncharacterized protein (58 aa).

To A.fulgidus AF2407.1.

This is an uncharacterized protein from Pyrococcus abyssi (strain GE5 / Orsay).